The following is a 426-amino-acid chain: 5-methylthioadenosine/S-adenosylhomocysteine deaminase (426 aa).

Positions 60 and 62 each coordinate Zn(2+). Residues Glu89 and His179 each coordinate substrate. His206 contributes to the Zn(2+) binding site. Positions 209 and 294 each coordinate substrate. Position 294 (Asp294) interacts with Zn(2+).

Belongs to the metallo-dependent hydrolases superfamily. MTA/SAH deaminase family. Zn(2+) is required as a cofactor.

It carries out the reaction S-adenosyl-L-homocysteine + H2O + H(+) = S-inosyl-L-homocysteine + NH4(+). The enzyme catalyses S-methyl-5'-thioadenosine + H2O + H(+) = S-methyl-5'-thioinosine + NH4(+). In terms of biological role, catalyzes the deamination of 5-methylthioadenosine and S-adenosyl-L-homocysteine into 5-methylthioinosine and S-inosyl-L-homocysteine, respectively. Is also able to deaminate adenosine. The polypeptide is 5-methylthioadenosine/S-adenosylhomocysteine deaminase (Dictyoglomus turgidum (strain DSM 6724 / Z-1310)).